The chain runs to 361 residues: Phosphoserine aminotransferase (361 aa).

Arginine 43 contacts L-glutamate. Pyridoxal 5'-phosphate is bound by residues 77–78 (AS), tryptophan 103, threonine 153, aspartate 173, and glutamine 196. The residue at position 197 (lysine 197) is an N6-(pyridoxal phosphate)lysine. 238–239 (NT) contacts pyridoxal 5'-phosphate.

The protein belongs to the class-V pyridoxal-phosphate-dependent aminotransferase family. SerC subfamily. In terms of assembly, homodimer. It depends on pyridoxal 5'-phosphate as a cofactor.

Its subcellular location is the cytoplasm. It catalyses the reaction O-phospho-L-serine + 2-oxoglutarate = 3-phosphooxypyruvate + L-glutamate. It carries out the reaction 4-(phosphooxy)-L-threonine + 2-oxoglutarate = (R)-3-hydroxy-2-oxo-4-phosphooxybutanoate + L-glutamate. The protein operates within amino-acid biosynthesis; L-serine biosynthesis; L-serine from 3-phospho-D-glycerate: step 2/3. It functions in the pathway cofactor biosynthesis; pyridoxine 5'-phosphate biosynthesis; pyridoxine 5'-phosphate from D-erythrose 4-phosphate: step 3/5. Its function is as follows. Catalyzes the reversible conversion of 3-phosphohydroxypyruvate to phosphoserine and of 3-hydroxy-2-oxo-4-phosphonooxybutanoate to phosphohydroxythreonine. The sequence is that of Phosphoserine aminotransferase from Azotobacter vinelandii (strain DJ / ATCC BAA-1303).